Reading from the N-terminus, the 273-residue chain is MNDKHLPDASAENPWLPLRQLTPARIALGRTGTSLPTRPQLDFQYAHAQARDAVHLPFDHAAISDGLRQRGRDSLLLHSAAADRHVYLQRPDLGRRLDEASVQRLREHAAGYDGQIDLAIVVADGLSALAVQRHTLPFLERLEEQALAEGWSLSPVVLVEQGRVAVADEIGELLRAKMSVILIGERPGLSSPDSLGLYFTWAPRVGLTDAYRNCISNVRLEGLSYGMAAHRLLYLMREACRRQLSGVNLKDEAEVQALDGEAPRTGNFLLARD.

Adenosylcob(III)alamin is bound by residues V164, E185, and C214.

This sequence belongs to the EutC family. As to quaternary structure, the basic unit is a heterodimer which dimerizes to form tetramers. The heterotetramers trimerize; 6 large subunits form a core ring with 6 small subunits projecting outwards. It depends on adenosylcob(III)alamin as a cofactor.

Its subcellular location is the bacterial microcompartment. The catalysed reaction is ethanolamine = acetaldehyde + NH4(+). It functions in the pathway amine and polyamine degradation; ethanolamine degradation. Functionally, catalyzes the deamination of various vicinal amino-alcohols to oxo compounds. Allows this organism to utilize ethanolamine as the sole source of nitrogen and carbon in the presence of external vitamin B12. This Pseudomonas aeruginosa (strain LESB58) protein is Ethanolamine ammonia-lyase small subunit.